Here is an 89-residue protein sequence, read N- to C-terminus: DNA-directed RNA polymerase subunit Rpo6 (89 aa).

This sequence belongs to the archaeal Rpo6/eukaryotic RPB6 RNA polymerase subunit family. As to quaternary structure, part of the 13-subunit RNA polymerase complex.

It localises to the cytoplasm. It carries out the reaction RNA(n) + a ribonucleoside 5'-triphosphate = RNA(n+1) + diphosphate. Functionally, DNA-dependent RNA polymerase (RNAP) catalyzes the transcription of DNA into RNA using the four ribonucleoside triphosphates as substrates. Its function is as follows. Reconstitution experiments show this subunit is required for basic activity. In Sulfolobus acidocaldarius (strain ATCC 33909 / DSM 639 / JCM 8929 / NBRC 15157 / NCIMB 11770), this protein is DNA-directed RNA polymerase subunit Rpo6.